The primary structure comprises 51 residues: ATP synthase F(1) complex subunit epsilon, mitochondrial (51 aa).

Lys21, Lys32, and Lys37 each carry N6-acetyllysine; alternate. N6-succinyllysine; alternate is present on residues Lys21, Lys32, and Lys37. Lys44 is modified (N6-acetyllysine).

It belongs to the eukaryotic ATPase epsilon family. As to quaternary structure, component of the ATP synthase complex composed at least of ATP5F1A/subunit alpha, ATP5F1B/subunit beta, ATP5MC1/subunit c (homooctomer), MT-ATP6/subunit a, MT-ATP8/subunit 8, ATP5ME/subunit e, ATP5MF/subunit f, ATP5MG/subunit g, ATP5MK/subunit k, ATP5MJ/subunit j, ATP5F1C/subunit gamma, ATP5F1D/subunit delta, ATP5F1E/subunit epsilon, ATP5PF/subunit F6, ATP5PB/subunit b, ATP5PD/subunit d, ATP5PO/subunit OSCP. ATP synthase complex consists of a soluble F(1) head domain (subunits alpha(3) and beta(3)) - the catalytic core - and a membrane F(0) domain - the membrane proton channel (subunits c, a, 8, e, f, g, k and j). These two domains are linked by a central stalk (subunits gamma, delta, and epsilon) rotating inside the F1 region and a stationary peripheral stalk (subunits F6, b, d, and OSCP).

It localises to the mitochondrion. The protein resides in the mitochondrion inner membrane. Functionally, subunit epsilon, of the mitochondrial membrane ATP synthase complex (F(1)F(0) ATP synthase or Complex V) that produces ATP from ADP in the presence of a proton gradient across the membrane which is generated by electron transport complexes of the respiratory chain. ATP synthase complex consist of a soluble F(1) head domain - the catalytic core - and a membrane F(1) domain - the membrane proton channel. These two domains are linked by a central stalk rotating inside the F(1) region and a stationary peripheral stalk. During catalysis, ATP synthesis in the catalytic domain of F(1) is coupled via a rotary mechanism of the central stalk subunits to proton translocation. In vivo, can only synthesize ATP although its ATP hydrolase activity can be activated artificially in vitro. May be essential for the assembly of F(1) and may play an important role in the incorporation of the hydrophobic subunit c into the F(1)-c oligomer rotor of the mitochondrial ATP synthase complex. This chain is ATP synthase F(1) complex subunit epsilon, mitochondrial, found in Rattus norvegicus (Rat).